A 170-amino-acid polypeptide reads, in one-letter code: Double homeobox protein 1 (170 aa).

DNA-binding regions (homeobox) lie at residues 19–78 (GRRM…LRQH) and 94–153 (GRRK…RGQS). The segment at 75–100 (LRQHRRQSRPWPGRRDPQKGRRKRTA) is disordered.

It belongs to the paired homeobox family. As to expression, expressed in rhabdomyosarcoma TE671 cells as well as in several other normal and cancer cells.

Its subcellular location is the nucleus. Probable transcription activator. Binds the P5 DNA element sequence 5'-GATCTGAGTCTAATTGAGAATTACTGTAC-3'. The sequence is that of Double homeobox protein 1 (DUX1) from Homo sapiens (Human).